The sequence spans 350 residues: S-adenosylmethionine:tRNA ribosyltransferase-isomerase (350 aa).

This sequence belongs to the QueA family. Monomer.

It is found in the cytoplasm. It carries out the reaction 7-aminomethyl-7-carbaguanosine(34) in tRNA + S-adenosyl-L-methionine = epoxyqueuosine(34) in tRNA + adenine + L-methionine + 2 H(+). The protein operates within tRNA modification; tRNA-queuosine biosynthesis. Transfers and isomerizes the ribose moiety from AdoMet to the 7-aminomethyl group of 7-deazaguanine (preQ1-tRNA) to give epoxyqueuosine (oQ-tRNA). This is S-adenosylmethionine:tRNA ribosyltransferase-isomerase from Vibrio vulnificus (strain YJ016).